Consider the following 92-residue polypeptide: Small ribosomal subunit protein uS15c (92 aa).

Belongs to the universal ribosomal protein uS15 family. Part of the 30S ribosomal subunit.

It is found in the plastid. Its subcellular location is the chloroplast. The chain is Small ribosomal subunit protein uS15c (rps15-A) from Lemna minor (Common duckweed).